We begin with the raw amino-acid sequence, 232 residues long: Orotidine 5'-phosphate decarboxylase (232 aa).

Substrate is bound by residues D11, K33, 60–69 (DLKLYDIPNT), T119, R180, Q189, G209, and R210. The Proton donor role is filled by K62.

This sequence belongs to the OMP decarboxylase family. Type 1 subfamily. As to quaternary structure, homodimer.

It carries out the reaction orotidine 5'-phosphate + H(+) = UMP + CO2. Its pathway is pyrimidine metabolism; UMP biosynthesis via de novo pathway; UMP from orotate: step 2/2. Functionally, catalyzes the decarboxylation of orotidine 5'-monophosphate (OMP) to uridine 5'-monophosphate (UMP). The protein is Orotidine 5'-phosphate decarboxylase of Wigglesworthia glossinidia brevipalpis.